We begin with the raw amino-acid sequence, 441 residues long: MKAAVDLKPTLTIIKTEKVDLELFPSPDMECADVPLLTPSSKEMMSQALKATFSGFTKEQQRLGIPKDPRQWTETHVRDWVMWAVNEFSLKGVDFQKFCMNGAALCALGKDCFLELAPDFVGDILWEHLEILQKEDVKPYQVNGVNPAYPESRYTSDYFISYGIEHAQCVPPSEFSEPSFITESYQTLHPISSEELLSLKYENDYPSVILRDPLQTDTLQNDYFAIKQEVVTPDNMCMGRTSRGKLGGQDSFESIESYDSCDRLTQSWSSQSSFNSLQRVPSYDSFDSEDYPAALPNHKPKGTFKDYVRDRADLNKDKPVIPAAALAGYTGSGPIQLWQFLLELLTDKSCQSFISWTGDGWEFKLSDPDEVARRWGKRKNKPKMNYEKLSRGLRYYYDKNIIHKTAGKRYVYRFVCDLQSLLGYTPEELHAMLDVKPDADE.

2 positions are modified to N6-acetyllysine; alternate: K8 and K15. Residues K8 and K15 each participate in a glycyl lysine isopeptide (Lys-Gly) (interchain with G-Cter in SUMO2); alternate cross-link. Residue T38 is modified to Phosphothreonine; by MAPK. Residues 51-136 (ATFSGFTKEQ…EHLEILQKED (86 aa)) enclose the PNT domain. Residues 130–243 (EILQKEDVKP…DNMCMGRTSR (114 aa)) are activation domain; required for transcription activation. Residue K138 forms a Glycyl lysine isopeptide (Lys-Gly) (interchain with G-Cter in SUMO2) linkage. Y223 is subject to Phosphotyrosine. Residue K227 forms a Glycyl lysine isopeptide (Lys-Gly) (interchain with G-Cter in SUMO) linkage. Residues S251 and S254 each carry the phosphoserine modification. T265 carries the post-translational modification Phosphothreonine. S267, S270, S282, and S285 each carry phosphoserine. Positions 304–312 (FKDYVRDRA) are helix HI-1. At K305 the chain carries N6-acetyllysine. Residues 323–330 (AAALAGYT) form a helix HI-2 region. Positions 335 to 415 (IQLWQFLLEL…AGKRYVYRFV (81 aa)) form a DNA-binding region, ETS. Residues 418–422 (LQSLL) form a helix H4 region. The interval 426–432 (PEELHAM) is helix H5.

This sequence belongs to the ETS family. In terms of assembly, binds DNA as a homodimer; homodimerization is required for transcription activation. Interacts with MAF and MAFB. Interacts with PAX5; the interaction alters DNA-binding properties. Interacts with DAXX. Interacts with UBE2I. Interacts with SP100; the interaction is direct and modulates ETS1 transcriptional activity. Sumoylated on Lys-15 and Lys-227, preferentially with SUMO2; which inhibits transcriptional activity. Post-translationally, ubiquitinated; which induces proteasomal degradation. In terms of processing, phosphorylation at Ser-251, Ser-282 and Ser-285 by CaMK2/CaMKII in response to calcium signaling decreases affinity for DNA: an increasing number of phosphoserines causes DNA-binding to become progressively weaker. Highly expressed within lymphoid cells. Isoforms c-ETS-1A and Ets-1 p27 are both detected in all fetal tissues tested, but vary with tissue type in adult tissues. None is detected in brain or kidney.

The protein resides in the nucleus. It is found in the cytoplasm. Autoinhibited by a module composed of four alpha helices (HI-1, HI-2, H4, and H5) that flank the DNA-binding ETS domain, reducing the affinity for DNA. Phosphorylation by CaMK2/CaMKII in response to calcium signaling decreases affinity for DNA. In terms of biological role, transcription factor. Directly controls the expression of cytokine and chemokine genes in a wide variety of different cellular contexts. May control the differentiation, survival and proliferation of lymphoid cells. May also regulate angiogenesis through regulation of expression of genes controlling endothelial cell migration and invasion. Acts as a dominant-negative for isoform c-ETS-1A. This Homo sapiens (Human) protein is Protein C-ets-1 (ETS1).